Consider the following 1603-residue polypeptide: MKSIIIASLVALAIAASPALDRTFSPKSEYVYKFDGLLLSGLPTTFSDASQTLISCRTRLQAVDDRYIHLQLIDIQYSASHIPQSEQWPKIKSLEQRELSDELKELLELPFRAQIRNGLVSEIQFSSEDAEWSKNAKRSILNLFSLRKSAPVDEMSQDQKDMESDKDSLFFNVHEKTMEGDCEVAYTIVQEGEKTIYTKSVNFDKCITRPETAYGLRFGSECKECEKEGQFVKPQTVYTYTFKNEKLQESEVHSIYTLNVNGQEVVKSETRSKVTFVEESKINREIKKVSGPKEEIVYSMENEKLIEQFYQQGDQAEVNPFKAIEMEQKVEQLDEIFRQIQEHEQNTPETVHLIARAVRMFRMCTIEELKKVHTTIYTKAEKKVQLVIETTLAVAGTKNTIQHLIHHFEKKSITPLRAAELLKSVQETLYPSEHIADLLIQLAQSPLSEKYEPLRQSAWLAAGSVVRGFASKTQDLPLIRPASRQTKEKYVRVFMQHFRNADSTYEKVLALKTLGNAGIDLSVYELVQLIQDPRQPLSIRTEAVDALRLLKDVMPRKIQKVLLPVYKNRQNKPELRMAALWRMMHTIPEEPVLAHIVSQMENESNQHVAAFTYNVLRQFSKSTNPCYQQLAVRCSKVLLFTRYQPQEQMLSTYSQLPLFNSEWLSGVQFDFATIFEKNAFLPKEVQASFETVFGGNWNKYFAQVGFSQQNFEQVILKTLEKLSLYGKQSDELRSRRVQSGIQMLQEIVKKMNIRPRVQQTDSQNAHAVFYLRYKEMDYIVLPIDMETIDNVVEKYVRNGEFDIKSLLTFLTNDSKFELHRALFFYEAERRIPTTIGMPLTISGKMPTILSINGKVSIELEKLGARLVLDIVPTVATTHVTEMRFWYPVIEQGVKSLQSARLHTPLRFESTVELKKNTLEITHKFVVPENKKTTVSVHTRPVAFIRVPKNQDSEYVETEEKTISHSQYQMSTEEIDRQYETFGLRINAQGNVLSQWTLPMVLMTEQDFEFTLENKNRPVEFTARVTIGNLEKTDLSEIKFDKIFEKEFDLENNESENRRQYFHKMIREIQSEQGFKNLITLKLEAPQQMYWNTELRTVCDKWIRMCKVEMDARRSPMEHENKEWTLRTELLAARPQMPSSLRQLREQPHREVQLALNAKWGSSKKSEITFNAQLEQSTEQKKFLRNIEREYKGIPEYELLIKAARLNQVNVVSEYKLTPESEYTFSRIFDLIKAYNFWTVSEKRVQNEDRRVVLQLSVEPLSRQYMNMTIQTPEQEVELKNVRIPRVVLPTIARRAMFQQTWEKTGATCKVGQSEVSTFDNVIYRAPLTTCYSLVAKDCSEQPRFAVLAKKINKNSEELLVKVVRREEEIVVKKSDDKFLVKVDEKKVNPTELEQYNIEILGDNLIVIRLPHGEVRFDGYTVKTNMPSVASQNQLCGLCGNNDGERDNEFMTADNYETEDVEEFHRSYLLKNEECEVENDRISEKKNYRNKWNREEKKSDYVSSSDYENNYDEKETENQLFKKTLIKEFSNRVCFSIEPVSECRRGLESEKTSNEKIRFTCMPRHSKNARRFLKEAREQTVADLVDFPVSFVESVKIPTACVAY.

The N-terminal stretch at 1-15 (MKSIIIASLVALAIA) is a signal peptide. The Vitellogenin domain maps to 24–685 (FSPKSEYVYK…EKNAFLPKEV (662 aa)). N-linked (GlcNAc...) asparagine glycosylation is present at Asn-1266. A VWFD domain is found at 1306-1475 (ATCKVGQSEV…SYLLKNEECE (170 aa)). 2 cysteine pairs are disulfide-bonded: Cys-1308–Cys-1438 and Cys-1330–Cys-1474.

As to expression, expressed in the intestine of adult hermaphrodites.

It is found in the secreted. Its function is as follows. Precursor of the egg-yolk proteins that are sources of nutrients during embryonic development. Together with other vitellogenins, may play a role in modulating life-span, acting via induction of autophagy and lysosomal lipolysis. The protein is Vitellogenin-3 (vit-3) of Caenorhabditis elegans.